The following is a 1058-amino-acid chain: Carbamoyl phosphate synthase large chain (1058 aa).

The carboxyphosphate synthetic domain stretch occupies residues 1–401 (MPKRTDIQKI…SLLKACRSLE (401 aa)). ATP is bound by residues Arg129, Arg169, Gly175, Gly176, Arg208, Ile210, Glu215, Gly241, Ile242, His243, Gln284, and Glu298. An ATP-grasp 1 domain is found at 133-327 (KQLMEELEQP…IAKLAAKIAV (195 aa)). Residues Gln284, Glu298, and Asn300 each coordinate Mg(2+). Mn(2+)-binding residues include Gln284, Glu298, and Asn300. The oligomerization domain stretch occupies residues 402 to 546 (IGVHHNEIPE…YSTYGWENES (145 aa)). Positions 547-929 (IRSDKESVLV…ALYKAFEASY (383 aa)) are carbamoyl phosphate synthetic domain. Positions 671 to 861 (EQALKELDIP…MAQVATKLIL (191 aa)) constitute an ATP-grasp 2 domain. Residues Arg707, Ser746, Ile748, Glu752, Gly777, Val778, His779, Ser780, Gln820, and Glu832 each contribute to the ATP site. The Mg(2+) site is built by Gln820, Glu832, and Asn834. Mn(2+) is bound by residues Gln820, Glu832, and Asn834. In terms of domain architecture, MGS-like spans 930-1058 (LHLPTFGNVV…ESRSFVTEAI (129 aa)). The allosteric domain stretch occupies residues 930–1058 (LHLPTFGNVV…ESRSFVTEAI (129 aa)).

The protein belongs to the CarB family. As to quaternary structure, composed of two chains; the small (or glutamine) chain promotes the hydrolysis of glutamine to ammonia, which is used by the large (or ammonia) chain to synthesize carbamoyl phosphate. Tetramer of heterodimers (alpha,beta)4. The cofactor is Mg(2+). Mn(2+) is required as a cofactor.

It catalyses the reaction hydrogencarbonate + L-glutamine + 2 ATP + H2O = carbamoyl phosphate + L-glutamate + 2 ADP + phosphate + 2 H(+). The enzyme catalyses hydrogencarbonate + NH4(+) + 2 ATP = carbamoyl phosphate + 2 ADP + phosphate + 2 H(+). Its pathway is amino-acid biosynthesis; L-arginine biosynthesis; carbamoyl phosphate from bicarbonate: step 1/1. It participates in pyrimidine metabolism; UMP biosynthesis via de novo pathway; (S)-dihydroorotate from bicarbonate: step 1/3. Its function is as follows. Large subunit of the glutamine-dependent carbamoyl phosphate synthetase (CPSase). CPSase catalyzes the formation of carbamoyl phosphate from the ammonia moiety of glutamine, carbonate, and phosphate donated by ATP, constituting the first step of 2 biosynthetic pathways, one leading to arginine and/or urea and the other to pyrimidine nucleotides. The large subunit (synthetase) binds the substrates ammonia (free or transferred from glutamine from the small subunit), hydrogencarbonate and ATP and carries out an ATP-coupled ligase reaction, activating hydrogencarbonate by forming carboxy phosphate which reacts with ammonia to form carbamoyl phosphate. The protein is Carbamoyl phosphate synthase large chain of Streptococcus pneumoniae serotype 19F (strain G54).